Reading from the N-terminus, the 257-residue chain is Neurotrophin-3 (257 aa).

Residues 1 to 18 (MSILFYMIFLAYLRGIQG) form the signal peptide. A propeptide spanning residues 19–138 (NSMDQRRLPE…VANRTARRKR (120 aa)) is cleaved from the precursor. Positions 61 to 81 (STLPKAEAPREPERGEPAKSE) are disordered. Residues 67–79 (EAPREPERGEPAK) show a composition bias toward basic and acidic residues. A glycan (N-linked (GlcNAc...) asparagine) is linked at N131. Intrachain disulfides connect C152/C217, C195/C246, and C205/C248.

It belongs to the NGF-beta family.

The protein localises to the secreted. In terms of biological role, seems to promote the survival of visceral and proprioceptive sensory neurons. The protein is Neurotrophin-3 (NTF3) of Sus scrofa (Pig).